A 170-amino-acid polypeptide reads, in one-letter code: Lipoprotein signal peptidase (170 aa).

4 helical membrane-spanning segments follow: residues 11 to 31, 41 to 61, 69 to 89, and 95 to 115; these read LSWLWLSLLVLVIDQASKFYF, IVVIPDLFSWTLAYNTGAAFS, WQRWLFALIAIAVSAVLVVWL, and NETWLAIALALVLGGALGNLY. Catalysis depends on residues Asp125 and Asp144. The chain crosses the membrane as a helical span at residues 136–156; the sequence is YFPAFNFADSAITVGAVMLAL.

This sequence belongs to the peptidase A8 family.

The protein localises to the cell inner membrane. It carries out the reaction Release of signal peptides from bacterial membrane prolipoproteins. Hydrolyzes -Xaa-Yaa-Zaa-|-(S,diacylglyceryl)Cys-, in which Xaa is hydrophobic (preferably Leu), and Yaa (Ala or Ser) and Zaa (Gly or Ala) have small, neutral side chains.. The protein operates within protein modification; lipoprotein biosynthesis (signal peptide cleavage). Functionally, this protein specifically catalyzes the removal of signal peptides from prolipoproteins. This is Lipoprotein signal peptidase from Pseudomonas fluorescens (strain Pf0-1).